The chain runs to 275 residues: Dermonecrotic toxin LhSicTox-alphaVI1ii (275 aa).

His5 is an active-site residue. Mg(2+)-binding residues include Glu25 and Asp27. The active-site Nucleophile is His41. 2 cysteine pairs are disulfide-bonded: Cys45/Cys51 and Cys47/Cys192. Asp85 is a Mg(2+) binding site.

Belongs to the arthropod phospholipase D family. Class II subfamily. The cofactor is Mg(2+). In terms of tissue distribution, expressed by the venom gland.

The protein resides in the secreted. It carries out the reaction an N-(acyl)-sphingosylphosphocholine = an N-(acyl)-sphingosyl-1,3-cyclic phosphate + choline. The catalysed reaction is an N-(acyl)-sphingosylphosphoethanolamine = an N-(acyl)-sphingosyl-1,3-cyclic phosphate + ethanolamine. It catalyses the reaction a 1-acyl-sn-glycero-3-phosphocholine = a 1-acyl-sn-glycero-2,3-cyclic phosphate + choline. The enzyme catalyses a 1-acyl-sn-glycero-3-phosphoethanolamine = a 1-acyl-sn-glycero-2,3-cyclic phosphate + ethanolamine. In terms of biological role, dermonecrotic toxins cleave the phosphodiester linkage between the phosphate and headgroup of certain phospholipids (sphingolipid and lysolipid substrates), forming an alcohol (often choline) and a cyclic phosphate. This toxin acts on sphingomyelin (SM). It may also act on ceramide phosphoethanolamine (CPE), lysophosphatidylcholine (LPC) and lysophosphatidylethanolamine (LPE), but not on lysophosphatidylserine (LPS), and lysophosphatidylglycerol (LPG). It acts by transphosphatidylation, releasing exclusively cyclic phosphate products as second products. Induces dermonecrosis, hemolysis, increased vascular permeability, edema, inflammatory response, and platelet aggregation. The polypeptide is Dermonecrotic toxin LhSicTox-alphaVI1ii (Loxosceles hirsuta (Recluse spider)).